Here is a 194-residue protein sequence, read N- to C-terminus: Oligoribonuclease (194 aa).

One can recognise an Exonuclease domain in the interval 11 to 174 (LIWIDLEMTG…SDVRDSINEL (164 aa)). The active site involves tyrosine 132.

This sequence belongs to the oligoribonuclease family.

The protein localises to the cytoplasm. In terms of biological role, 3'-to-5' exoribonuclease specific for small oligoribonucleotides. The protein is Oligoribonuclease of Xanthomonas oryzae pv. oryzae (strain MAFF 311018).